Consider the following 262-residue polypeptide: Thiazole synthase (262 aa).

Lys-97 serves as the catalytic Schiff-base intermediate with DXP. Residues Gly-158, 185-186 (AG), and 207-208 (NT) each bind 1-deoxy-D-xylulose 5-phosphate. The disordered stretch occupies residues 243–262 (DKAQASTPTVGQPFWHSAEY).

The protein belongs to the ThiG family. In terms of assembly, homotetramer. Forms heterodimers with either ThiH or ThiS.

It is found in the cytoplasm. It carries out the reaction [ThiS sulfur-carrier protein]-C-terminal-Gly-aminoethanethioate + 2-iminoacetate + 1-deoxy-D-xylulose 5-phosphate = [ThiS sulfur-carrier protein]-C-terminal Gly-Gly + 2-[(2R,5Z)-2-carboxy-4-methylthiazol-5(2H)-ylidene]ethyl phosphate + 2 H2O + H(+). Its pathway is cofactor biosynthesis; thiamine diphosphate biosynthesis. In terms of biological role, catalyzes the rearrangement of 1-deoxy-D-xylulose 5-phosphate (DXP) to produce the thiazole phosphate moiety of thiamine. Sulfur is provided by the thiocarboxylate moiety of the carrier protein ThiS. In vitro, sulfur can be provided by H(2)S. The chain is Thiazole synthase from Neisseria meningitidis serogroup A / serotype 4A (strain DSM 15465 / Z2491).